A 904-amino-acid polypeptide reads, in one-letter code: Toll-like receptor 3 (904 aa).

Positions 1–26 are cleaved as a signal peptide; the sequence is MSRPLPYHIYFFTGLLTCWILCTSSA. Positions 27–52 constitute an LRRNT domain; that stretch reads HKCTVRHEVADCSHLKLTQIPEDLPT. Topologically, residues 27–705 are lumenal; the sequence is HKCTVRHEVA…PCKDSAPFEL (679 aa). Cys29 and Cys38 form a disulfide bridge. 3 N-linked (GlcNAc...) asparagine glycosylation sites follow: Asn53, Asn58, and Asn71. LRR repeat units lie at residues 53-74, 77-98, 101-122, 125-146, 149-170, and 173-196; these read NITV…NFTR, RLTI…LCQN, WLEI…TFVF, NLTE…PFKN, NLIK…TQLQ, and NLQE…DFLG. Cys96 and Cys123 are disulfide-bonded. The N-linked (GlcNAc...) asparagine glycan is linked to Asn125. Residue Asn197 is glycosylated (N-linked (GlcNAc...) asparagine). LRR repeat units follow at residues 199-220 and 223-245; these read SLER…CFHA and KLSG…LCLE. Residues Asn248, Asn253, Asn276, and Asn292 are each glycosylated (N-linked (GlcNAc...) asparagine). 14 LRR repeats span residues 250-271, 276-297, 300-321, 324-345, 357-378, 381-401, 409-430, 433-455, 466-487, 508-529, 532-553, 564-585, 588-609, and 612-633; these read SIEN…TFSG, NLTT…SFAW, HLEY…SFYG, NLRH…TSLP, CLEY…TFTG, RLKF…TNET, PLLL…AFSW, HLEV…EWRG, YNKY…QRLM, NLVI…LLKG, KLEI…ANPG, HLRI…AFKD, ELKS…VFDN, and SLKS…VFGP. N-linked (GlcNAc...) asparagine glycans are attached at residues Asn399 and Asn414. Asn637, Asn663, and Asn668 each carry an N-linked (GlcNAc...) asparagine glycan. In terms of domain architecture, LRRCT spans 646 to 699; sequence NPFDCTCESIAWFVNWINSTHTNISELSNHYLCNTPPQYHGFPVMLFDVSPCKD. Cystine bridges form between Cys650/Cys678 and Cys652/Cys697. A helical transmembrane segment spans residues 706–726; it reads LFMINTNILLIFIFIVLLIHF. At 727-904 the chain is on the cytoplasmic side; that stretch reads EGWRISFYWN…VALGSRNSAH (178 aa). Residues 754–897 form the TIR domain; that stretch reads FEYAAYIIHA…AFHHKLKVAL (144 aa). The residue at position 759 (Tyr759) is a Phosphotyrosine. Residues Lys812 and Lys831 each participate in a glycyl lysine isopeptide (Lys-Gly) (interchain with G-Cter in ubiquitin) cross-link. Tyr858 is subject to Phosphotyrosine.

Belongs to the Toll-like receptor family. In terms of assembly, monomer and homodimer; dimerization is triggered by ligand-binding and is required for TLR3 signaling. Interacts (via transmembrane domain) with UNC93B1. Interacts with TICAM1 (via the TIR domain) in response to poly(I:C) and this interaction is enhanced the presence of WDFY1. Interacts with SRC; upon binding of double-stranded RNA. The tyrosine-phosphorylated form (via TIR domain) interacts with WDFY1 (via WD repeat 2) in response to poly(I:C). In terms of processing, ubiquitinated by TRIM3; leading to recognition and sorting of polyubiquitinated TLR3 by the ESCRT complexes. Ubiquitinated by ZNRF1 via 'Lys-63'-linked ubiquitin chains; leading to TLR3 lysosomal trafficking and degradation.

The protein localises to the endoplasmic reticulum membrane. The protein resides in the endosome membrane. It is found in the early endosome. Key component of innate and adaptive immunity. TLRs (Toll-like receptors) control host immune response against pathogens through recognition of molecular patterns specific to microorganisms. TLR3 is a nucleotide-sensing TLR which is activated by double-stranded RNA, a sign of viral infection. Acts via the adapter TRIF/TICAM1, leading to NF-kappa-B activation, cytokine secretion and the inflammatory response. In Boselaphus tragocamelus (Nilgai), this protein is Toll-like receptor 3 (TLR3).